The sequence spans 292 residues: Phosphatidylglycerol--prolipoprotein diacylglyceryl transferase (292 aa).

Helical transmembrane passes span 18–38 (LFGVTFALRWYALAYIAGLLI), 67–87 (LLTWVILGVILGGRLGFVLFY), and 105–125 (GGMSFHGGFLGVMTALVAFCL). R150 serves as a coordination point for a 1,2-diacyl-sn-glycero-3-phospho-(1'-sn-glycerol). The next 3 helical transmembrane spans lie at 193-213 (QIYEAGLEGILLFAVLSLLVW), 222-242 (GSVSGMFLAGYGATRFLVEFV), and 266-286 (GLTMGQILSLPMILLGLYLIL).

It belongs to the Lgt family.

It localises to the cell inner membrane. The catalysed reaction is L-cysteinyl-[prolipoprotein] + a 1,2-diacyl-sn-glycero-3-phospho-(1'-sn-glycerol) = an S-1,2-diacyl-sn-glyceryl-L-cysteinyl-[prolipoprotein] + sn-glycerol 1-phosphate + H(+). It functions in the pathway protein modification; lipoprotein biosynthesis (diacylglyceryl transfer). In terms of biological role, catalyzes the transfer of the diacylglyceryl group from phosphatidylglycerol to the sulfhydryl group of the N-terminal cysteine of a prolipoprotein, the first step in the formation of mature lipoproteins. This chain is Phosphatidylglycerol--prolipoprotein diacylglyceryl transferase, found in Cereibacter sphaeroides (strain ATCC 17029 / ATH 2.4.9) (Rhodobacter sphaeroides).